The primary structure comprises 361 residues: NudC domain-containing protein 3 (361 aa).

Basic and acidic residues predominate over residues 87-97 (KIRRKEEEEAK). Residues 87 to 106 (KIRRKEEEEAKTVSAAAAEK) are disordered. Ser-146 carries the post-translational modification Phosphoserine. The CS domain maps to 185–277 (AVRENYTWSQ…VGEYWWNAIL (93 aa)). Residues Ser-340 and Ser-355 each carry the phosphoserine modification.

This chain is NudC domain-containing protein 3 (NUDCD3), found in Pongo abelii (Sumatran orangutan).